Here is a 606-residue protein sequence, read N- to C-terminus: Neutral/alkaline invertase 3, chloroplastic (606 aa).

The N-terminal 58 residues, Met1–Arg58, are a transit peptide targeting the chloroplast. The disordered stretch occupies residues Arg97–Val126.

Belongs to the glycosyl hydrolase 100 family.

It is found in the plastid. The protein resides in the chloroplast. The enzyme catalyses Hydrolysis of terminal non-reducing beta-D-fructofuranoside residues in beta-D-fructofuranosides.. In terms of biological role, mitochondrial invertase that cleaves sucrose into glucose and fructose. The sequence is that of Neutral/alkaline invertase 3, chloroplastic from Oryza sativa subsp. japonica (Rice).